The primary structure comprises 58 residues: uncharacterized protein (58 aa).

Disordered stretches follow at residues 1-20 and 38-58; these read MKKN…MNKK and IIET…KKQQ.

This is an uncharacterized protein from Bacillus subtilis (strain 168).